The primary structure comprises 169 residues: Ureidoglycolate lyase (169 aa).

The protein belongs to the ureidoglycolate lyase family. As to quaternary structure, homodimer. Requires Ni(2+) as cofactor.

It catalyses the reaction (S)-ureidoglycolate = urea + glyoxylate. The protein operates within nitrogen metabolism; (S)-allantoin degradation. Catalyzes the catabolism of the allantoin degradation intermediate (S)-ureidoglycolate, generating urea and glyoxylate. Involved in the utilization of allantoin as nitrogen source. The chain is Ureidoglycolate lyase from Brucella ovis (strain ATCC 25840 / 63/290 / NCTC 10512).